The chain runs to 521 residues: Probable protein kinase UbiB (521 aa).

The Protein kinase domain occupies S119–A497. Residues V125–V133 and K151 each bind ATP. D286 serves as the catalytic Proton acceptor. Residues Q496 to V516 traverse the membrane as a helical segment.

This sequence belongs to the ABC1 family. UbiB subfamily.

It localises to the cell inner membrane. It functions in the pathway cofactor biosynthesis; ubiquinone biosynthesis [regulation]. Functionally, is probably a protein kinase regulator of UbiI activity which is involved in aerobic coenzyme Q (ubiquinone) biosynthesis. The chain is Probable protein kinase UbiB from Delftia acidovorans (strain DSM 14801 / SPH-1).